The sequence spans 224 residues: Inhibitor of apoptosis protein (224 aa).

One copy of the BIR repeat lies at 29–92 (VDARNQSFAI…GFWSRNCGFM (64 aa)). Zn(2+) contacts are provided by Cys62, Cys65, His82, and Cys89. A C4-type zinc finger spans residues 189–207 (CMTCGIEPIKKDENFCNAC).

This sequence belongs to the asfivirus IAP family. In terms of assembly, interacts with subunit p17 of host CASP3.

It localises to the host cytoplasm. It is found in the virion. Prevent apoptosis of host cell by inhibiting caspase-3/CASP3 activation to promote the viral replication. Also induces the activation of host NF-kappaB. This is Inhibitor of apoptosis protein from Ornithodoros (relapsing fever ticks).